The chain runs to 86 residues: Late effector protein 1 (86 aa).

The first 24 residues, 1 to 24 (MRSHQMAAFFAVSLMMMVVLGALS), serve as a signal peptide directing secretion.

Belongs to the lep1 family. As to quaternary structure, interacts at the cell wall with secreted rep1 repellent peptides.

It is found in the secreted. Its subcellular location is the cell wall. Core effector contributing to spore formation and tumor formation at the host plant. Modulates surface hydrophobicity promoting cell-cell or cell-surface contacts. Lep1 and rep1 interact in aerial hyphae to form a strong hydrophobic layer. Plays a crucial role in hyphal aggregation that might be a prerequisite for strong proliferation of diploid cells and for induction of the morphological changes associated with spore formation. This chain is Late effector protein 1, found in Mycosarcoma maydis (Corn smut fungus).